A 348-amino-acid chain; its full sequence is Protein pelota homolog (348 aa).

Belongs to the eukaryotic release factor 1 family. Pelota subfamily. Monomer. Requires a divalent metal cation as cofactor.

The protein resides in the cytoplasm. Functionally, may function in recognizing stalled ribosomes, interact with stem-loop structures in stalled mRNA molecules, and effect endonucleolytic cleavage of the mRNA. May play a role in the release non-functional ribosomes and degradation of damaged mRNAs. Has endoribonuclease activity. The protein is Protein pelota homolog of Methanococcus maripaludis (strain C6 / ATCC BAA-1332).